We begin with the raw amino-acid sequence, 206 residues long: Large ribosomal subunit protein uL4 (206 aa).

Belongs to the universal ribosomal protein uL4 family. In terms of assembly, part of the 50S ribosomal subunit.

Functionally, one of the primary rRNA binding proteins, this protein initially binds near the 5'-end of the 23S rRNA. It is important during the early stages of 50S assembly. It makes multiple contacts with different domains of the 23S rRNA in the assembled 50S subunit and ribosome. Its function is as follows. Forms part of the polypeptide exit tunnel. The chain is Large ribosomal subunit protein uL4 from Afipia carboxidovorans (strain ATCC 49405 / DSM 1227 / KCTC 32145 / OM5) (Oligotropha carboxidovorans).